We begin with the raw amino-acid sequence, 325 residues long: Terpene synthase 11 (325 aa).

The DDxx(x)D/E motif signature appears at 97 to 102 (DDEYLE). The NDxxSxxxD/E motif motif lies at 227–235 (NDIYSFVKE).

The protein belongs to the terpene synthase family.

It catalyses the reaction (2E,6E)-farnesyl diphosphate = (E)-beta-farnesene + diphosphate. The catalysed reaction is (2E,6E)-farnesyl diphosphate = (3E,6E)-alpha-farnesene + diphosphate. The enzyme catalyses geranylgeranyl diphosphate + H2O = (S)-(+)-nephthenol + diphosphate. Terpene synthase that converts its substrate farnesyl diphosphate (FPP) into the sesquiterpenes (E)-beta-farnesene and (E,E)-alpha-farnesene. TPS11 also converts geranylgeranyl diphosphate (GGPP) into the diterpene (S)-nephthenol. The polypeptide is Terpene synthase 11 (Dictyostelium purpureum (Slime mold)).